A 119-amino-acid chain; its full sequence is Ribonuclease P protein component (119 aa).

Belongs to the RnpA family. Consists of a catalytic RNA component (M1 or rnpB) and a protein subunit.

It carries out the reaction Endonucleolytic cleavage of RNA, removing 5'-extranucleotides from tRNA precursor.. Its function is as follows. RNaseP catalyzes the removal of the 5'-leader sequence from pre-tRNA to produce the mature 5'-terminus. It can also cleave other RNA substrates such as 4.5S RNA. The protein component plays an auxiliary but essential role in vivo by binding to the 5'-leader sequence and broadening the substrate specificity of the ribozyme. This Streptococcus gordonii (strain Challis / ATCC 35105 / BCRC 15272 / CH1 / DL1 / V288) protein is Ribonuclease P protein component.